A 291-amino-acid polypeptide reads, in one-letter code: Protease HtpX homolog (291 aa).

2 helical membrane-spanning segments follow: residues V4 to I24 and M38 to L58. Position 144 (H144) interacts with Zn(2+). The active site involves E145. H148 serves as a coordination point for Zn(2+). 2 helical membrane-spanning segments follow: residues L159–V179 and I199–F219. Zn(2+) is bound at residue E224.

The protein belongs to the peptidase M48B family. It depends on Zn(2+) as a cofactor.

It localises to the cell inner membrane. This is Protease HtpX homolog from Pelodictyon phaeoclathratiforme (strain DSM 5477 / BU-1).